The primary structure comprises 159 residues: 2-C-methyl-D-erythritol 2,4-cyclodiphosphate synthase (159 aa).

A divalent metal cation contacts are provided by aspartate 10 and histidine 12. 4-CDP-2-C-methyl-D-erythritol 2-phosphate is bound by residues aspartate 10 to histidine 12 and histidine 37 to serine 38. Histidine 45 contributes to the a divalent metal cation binding site. Residues aspartate 59–glycine 61, phenylalanine 64–aspartate 68, alanine 103–leucine 109, threonine 135–glutamate 138, phenylalanine 142, and arginine 145 each bind 4-CDP-2-C-methyl-D-erythritol 2-phosphate.

It belongs to the IspF family. In terms of assembly, homotrimer. Requires a divalent metal cation as cofactor.

It catalyses the reaction 4-CDP-2-C-methyl-D-erythritol 2-phosphate = 2-C-methyl-D-erythritol 2,4-cyclic diphosphate + CMP. The protein operates within isoprenoid biosynthesis; isopentenyl diphosphate biosynthesis via DXP pathway; isopentenyl diphosphate from 1-deoxy-D-xylulose 5-phosphate: step 4/6. Functionally, involved in the biosynthesis of isopentenyl diphosphate (IPP) and dimethylallyl diphosphate (DMAPP), two major building blocks of isoprenoid compounds. Catalyzes the conversion of 4-diphosphocytidyl-2-C-methyl-D-erythritol 2-phosphate (CDP-ME2P) to 2-C-methyl-D-erythritol 2,4-cyclodiphosphate (ME-CPP) with a corresponding release of cytidine 5-monophosphate (CMP). The chain is 2-C-methyl-D-erythritol 2,4-cyclodiphosphate synthase from Francisella philomiragia subsp. philomiragia (strain ATCC 25017 / CCUG 19701 / FSC 153 / O#319-036).